A 425-amino-acid polypeptide reads, in one-letter code: Glutamate-1-semialdehyde 2,1-aminomutase (425 aa).

At lysine 266 the chain carries N6-(pyridoxal phosphate)lysine.

Belongs to the class-III pyridoxal-phosphate-dependent aminotransferase family. HemL subfamily. In terms of assembly, homodimer. Pyridoxal 5'-phosphate is required as a cofactor.

Its subcellular location is the cytoplasm. It carries out the reaction (S)-4-amino-5-oxopentanoate = 5-aminolevulinate. Its pathway is porphyrin-containing compound metabolism; protoporphyrin-IX biosynthesis; 5-aminolevulinate from L-glutamyl-tRNA(Glu): step 2/2. The sequence is that of Glutamate-1-semialdehyde 2,1-aminomutase from Nitratidesulfovibrio vulgaris (strain DSM 19637 / Miyazaki F) (Desulfovibrio vulgaris).